The chain runs to 284 residues: SF-assemblin (284 aa).

A disordered region spans residues 1 to 30; sequence PTPSPEARVASRPFLDSPLPGSPRSGSPTG. Residues 1–38 are nonhelical region; sequence PTPSPEARVASRPFLDSPLPGSPRSGSPTGYITATKAI. A compositionally biased stretch (low complexity) spans 17 to 30; the sequence is SPLPGSPRSGSPTG. The tract at residues 39-284 is rod; the sequence is SAGKLEHVAE…QDGLRIVNNS (246 aa). 2 coiled-coil regions span residues 56-102 and 239-268; these read EIEL…QIQV and LDEI…QAVN.

The protein belongs to the SF-assemblin family. Post-translationally, consists of at least four isoforms including two phosphorylated.

Its subcellular location is the cytoplasm. It localises to the cytoskeleton. Functionally, major component of the striated microtubule-associated fibers (SMAFs; system-I-fibers). The polypeptide is SF-assemblin (Spermatozopsis similis (Green alga)).